A 230-amino-acid chain; its full sequence is Orotidine 5'-phosphate decarboxylase (230 aa).

Substrate contacts are provided by residues aspartate 11, lysine 34, 61–70 (DLKLHDIPNT), threonine 117, arginine 179, glutamine 188, glycine 208, and arginine 209. The Proton donor role is filled by lysine 63.

It belongs to the OMP decarboxylase family. Type 1 subfamily. As to quaternary structure, homodimer.

The catalysed reaction is orotidine 5'-phosphate + H(+) = UMP + CO2. The protein operates within pyrimidine metabolism; UMP biosynthesis via de novo pathway; UMP from orotate: step 2/2. Its function is as follows. Catalyzes the decarboxylation of orotidine 5'-monophosphate (OMP) to uridine 5'-monophosphate (UMP). The sequence is that of Orotidine 5'-phosphate decarboxylase from Streptococcus mutans serotype c (strain ATCC 700610 / UA159).